The primary structure comprises 73 residues: uncharacterized protein (73 aa).

The tract at residues 1 to 32 (MFLSSAVRKDSNGVRHLPSVQRWTPGSPPTRA) is disordered.

This is an uncharacterized protein from Frog virus 3 (isolate Goorha) (FV-3).